The following is a 148-amino-acid chain: Large ribosomal subunit protein bL9 (148 aa).

It belongs to the bacterial ribosomal protein bL9 family.

Functionally, binds to the 23S rRNA. The polypeptide is Large ribosomal subunit protein bL9 (Bacillus cereus (strain ATCC 10987 / NRS 248)).